A 61-amino-acid polypeptide reads, in one-letter code: Translational regulator CsrA (61 aa).

Belongs to the CsrA/RsmA family. As to quaternary structure, homodimer; the beta-strands of each monomer intercalate to form a hydrophobic core, while the alpha-helices form wings that extend away from the core.

The protein resides in the cytoplasm. Its function is as follows. A key translational regulator that binds mRNA to regulate translation initiation and/or mRNA stability. Mediates global changes in gene expression, shifting from rapid growth to stress survival by linking envelope stress, the stringent response and the catabolite repression systems. Usually binds in the 5'-UTR; binding at or near the Shine-Dalgarno sequence prevents ribosome-binding, repressing translation, binding elsewhere in the 5'-UTR can activate translation and/or stabilize the mRNA. Its function is antagonized by small RNA(s). The protein is Translational regulator CsrA of Mannheimia succiniciproducens (strain KCTC 0769BP / MBEL55E).